The chain runs to 612 residues: 1,8-cineole synthase, chloroplastic (612 aa).

A chloroplast-targeting transit peptide spans 1 to 52 (MALVSVAPLASRSCLSKSLISSTHELKPLRRTILPTLRWKSATPSINMCLTT). 3 residues coordinate Mg(2+): Asp363, Asp367, and Asp515. The short motif at 363–367 (DDIYD) is the DDXXD motif element.

The protein belongs to the terpene synthase family. Tpsd subfamily. Mg(2+) serves as cofactor. Requires Mn(2+) as cofactor.

Its subcellular location is the plastid. The protein localises to the chloroplast. The catalysed reaction is (2E)-geranyl diphosphate + H2O = 1,8-cineole + diphosphate. The protein operates within terpene metabolism; oleoresin biosynthesis. In terms of biological role, terpene synthase (TPS) involved in the biosynthesis of monoterpene natural products included in conifer oleoresin secretions and volatile emissions; these compounds contribute to biotic and abiotic stress defense against herbivores and pathogens. Catalyzes the conversion of (2E)-geranyl diphosphate (GPP) to 1,8-cineole. The protein is 1,8-cineole synthase, chloroplastic of Picea sitchensis (Sitka spruce).